We begin with the raw amino-acid sequence, 495 residues long: Glycerol kinase (495 aa).

Threonine 11 contributes to the ADP binding site. 3 residues coordinate ATP: threonine 11, threonine 12, and serine 13. Threonine 11 contributes to the sn-glycerol 3-phosphate binding site. Arginine 15 is a binding site for ADP. Positions 81, 82, 133, and 242 each coordinate sn-glycerol 3-phosphate. Residues arginine 81, glutamate 82, tyrosine 133, aspartate 242, and glutamine 243 each contribute to the glycerol site. The ADP site is built by threonine 264 and glycine 307. ATP contacts are provided by threonine 264, glycine 307, glutamine 311, and glycine 410. Glycine 410 lines the ADP pocket.

It belongs to the FGGY kinase family.

The enzyme catalyses glycerol + ATP = sn-glycerol 3-phosphate + ADP + H(+). The protein operates within polyol metabolism; glycerol degradation via glycerol kinase pathway; sn-glycerol 3-phosphate from glycerol: step 1/1. Inhibited by fructose 1,6-bisphosphate (FBP). Key enzyme in the regulation of glycerol uptake and metabolism. Catalyzes the phosphorylation of glycerol to yield sn-glycerol 3-phosphate. The protein is Glycerol kinase of Roseobacter denitrificans (strain ATCC 33942 / OCh 114) (Erythrobacter sp. (strain OCh 114)).